Here is a 164-residue protein sequence, read N- to C-terminus: Sperm axonemal maintenance protein CFAP97D1 (164 aa).

Residues 61-88 are a coiled coil; the sequence is LSKIQGEQKRIDKIEYENRQLCQKIANA.

This sequence belongs to the CFAP97 family. In terms of tissue distribution, expressed exclusively in testis.

Functionally, required for male fertility through its role in axonemal doublet stabilization which is essential for sperm motility and fertilization. This is Sperm axonemal maintenance protein CFAP97D1 (Cfap97d1) from Mus musculus (Mouse).